The primary structure comprises 168 residues: ATP synthase F(1) complex subunit delta, mitochondrial (168 aa).

The N-terminal 22 residues, 1–22, are a transit peptide targeting the mitochondrion; it reads MLPSALLRRPGLGRLVRQVRLY. Lysine 136 and lysine 165 each carry N6-acetyllysine; alternate. 2 positions are modified to N6-succinyllysine; alternate: lysine 136 and lysine 165.

It belongs to the ATPase epsilon chain family. In terms of assembly, component of the ATP synthase complex composed at least of ATP5F1A/subunit alpha, ATP5F1B/subunit beta, ATP5MC1/subunit c (homooctomer), MT-ATP6/subunit a, MT-ATP8/subunit 8, ATP5ME/subunit e, ATP5MF/subunit f, ATP5MG/subunit g, ATP5MK/subunit k, ATP5MJ/subunit j, ATP5F1C/subunit gamma, ATP5F1D/subunit delta, ATP5F1E/subunit epsilon, ATP5PF/subunit F6, ATP5PB/subunit b, ATP5PD/subunit d, ATP5PO/subunit OSCP. ATP synthase complex consists of a soluble F(1) head domain (subunits alpha(3) and beta(3)) - the catalytic core - and a membrane F(0) domain - the membrane proton channel (subunits c, a, 8, e, f, g, k and j). These two domains are linked by a central stalk (subunits gamma, delta, and epsilon) rotating inside the F1 region and a stationary peripheral stalk (subunits F6, b, d, and OSCP). Component of a complex composed at least by ATPIF1, ATP5F1A, ATP5F1B, ATP5F1C AND ATP5F1E.

Its subcellular location is the mitochondrion. It is found in the mitochondrion inner membrane. Subunit delta, of the mitochondrial membrane ATP synthase complex (F(1)F(0) ATP synthase or Complex V) that produces ATP from ADP in the presence of a proton gradient across the membrane which is generated by electron transport complexes of the respiratory chain. ATP synthase complex consist of a soluble F(1) head domain - the catalytic core - and a membrane F(1) domain - the membrane proton channel. These two domains are linked by a central stalk rotating inside the F(1) region and a stationary peripheral stalk. During catalysis, ATP synthesis in the catalytic domain of F(1) is coupled via a rotary mechanism of the central stalk subunits to proton translocation. In vivo, can only synthesize ATP although its ATP hydrolase activity can be activated artificially in vitro. With the central stalk subunit gamma, is essential for the biogenesis of F(1) catalytic part of the ATP synthase complex namely in the formation of F1 assembly intermediate. The chain is ATP synthase F(1) complex subunit delta, mitochondrial from Bos taurus (Bovine).